We begin with the raw amino-acid sequence, 296 residues long: Fructose-bisphosphate aldolase class 1 (296 aa).

The active-site Proton acceptor is the glutamate 175. Lysine 212 serves as the catalytic Schiff-base intermediate with dihydroxyacetone-P.

Belongs to the class I fructose-bisphosphate aldolase family.

The catalysed reaction is beta-D-fructose 1,6-bisphosphate = D-glyceraldehyde 3-phosphate + dihydroxyacetone phosphate. It functions in the pathway carbohydrate degradation; glycolysis; D-glyceraldehyde 3-phosphate and glycerone phosphate from D-glucose: step 4/4. In Staphylococcus aureus (strain Mu3 / ATCC 700698), this protein is Fructose-bisphosphate aldolase class 1.